The chain runs to 394 residues: NAD(P)H-quinone oxidoreductase subunit H (394 aa).

It belongs to the complex I 49 kDa subunit family. As to quaternary structure, NDH-1 can be composed of about 15 different subunits; different subcomplexes with different compositions have been identified which probably have different functions.

The protein resides in the cellular thylakoid membrane. The enzyme catalyses a plastoquinone + NADH + (n+1) H(+)(in) = a plastoquinol + NAD(+) + n H(+)(out). It catalyses the reaction a plastoquinone + NADPH + (n+1) H(+)(in) = a plastoquinol + NADP(+) + n H(+)(out). In terms of biological role, NDH-1 shuttles electrons from an unknown electron donor, via FMN and iron-sulfur (Fe-S) centers, to quinones in the respiratory and/or the photosynthetic chain. The immediate electron acceptor for the enzyme in this species is believed to be plastoquinone. Couples the redox reaction to proton translocation, and thus conserves the redox energy in a proton gradient. Cyanobacterial NDH-1 also plays a role in inorganic carbon-concentration. This chain is NAD(P)H-quinone oxidoreductase subunit H, found in Trichormus variabilis (strain ATCC 29413 / PCC 7937) (Anabaena variabilis).